Reading from the N-terminus, the 194-residue chain is MIGLRPAFSTMLFLLLLTGGVYPLLTTALGQWWFPWQANGSLIHKDNVIRGSALIGQSFTAAGYFHGRPSATADTPYNPLASGGSNLAASNPELDAQIQARVAALRAANPQASSAVPVELATASASGLDNNLTPGAAAWQIPRVAAARQLPVEQVAQLVAEYTHRPLARFLGQPVVNIVELNLALDALQGHRAK.

A helical membrane pass occupies residues 12–34 (LFLLLLTGGVYPLLTTALGQWWF).

Belongs to the KdpC family. As to quaternary structure, the system is composed of three essential subunits: KdpA, KdpB and KdpC.

The protein resides in the cell inner membrane. Part of the high-affinity ATP-driven potassium transport (or Kdp) system, which catalyzes the hydrolysis of ATP coupled with the electrogenic transport of potassium into the cytoplasm. This subunit acts as a catalytic chaperone that increases the ATP-binding affinity of the ATP-hydrolyzing subunit KdpB by the formation of a transient KdpB/KdpC/ATP ternary complex. In Salmonella agona (strain SL483), this protein is Potassium-transporting ATPase KdpC subunit.